The primary structure comprises 628 residues: Chaperone protein HtpG (628 aa).

Residues 1-337 (MSEKKYTFET…SADLPLNVSR (337 aa)) are a; substrate-binding. The interval 338–554 (EILQHNKVID…DYGMSLHMQK (217 aa)) is b. A c region spans residues 555–628 (MMEEAGQSFM…FVKLVNKYIR (74 aa)).

It belongs to the heat shock protein 90 family. In terms of assembly, homodimer.

It localises to the cytoplasm. In terms of biological role, molecular chaperone. Has ATPase activity. This is Chaperone protein HtpG from Francisella tularensis subsp. holarctica (strain FTNF002-00 / FTA).